The following is a 276-amino-acid chain: Arginine and glutamate-rich protein 1 (276 aa).

Composition is skewed to basic residues over residues 1-30 (MGRS…RSRS) and 38-59 (ARKR…RSRS). The segment at 1 to 77 (MGRSRSRSSS…RRDRERERER (77 aa)) is necessary and sufficient for RNA binding. The interval 1–117 (MGRSRSRSSS…EKKAEFERQR (117 aa)) is disordered. Composition is skewed to basic and acidic residues over residues 67–87 (SRRD…RIDI) and 96–117 (SSLD…ERQR). Positions 78–276 (ASSPPDRIDI…KLSFSLKSQD (199 aa)) are necessary and sufficient for transcriptional regulation. Residues 175 to 179 (LLEEL) carry the LXXLL motif 1; degenerate motif. The LXXLL motif 2; degenerate motif lies at 204-208 (LERIL). Residues 240-256 (RMKLEQERQRQQKEEQK) are compositionally biased toward basic and acidic residues. Positions 240-276 (RMKLEQERQRQQKEEQKIILGKGKSRPKLSFSLKSQD) are disordered.

The protein belongs to the ARGLU1 family.

It is found in the nucleus. The protein resides in the nucleus speckle. It localises to the chromosome. Dual function regulator of gene expression; regulator of transcription and modulator of alternative splicing. General coactivator of nuclear receptor-induced gene expression. This chain is Arginine and glutamate-rich protein 1 (ARGLU1), found in Gallus gallus (Chicken).